The chain runs to 306 residues: Beta-lactamase 1 (306 aa).

An N-terminal signal peptide occupies residues 1-27 (MILKNKRMLKIGICVGILGLSITSLEA). Residue S91 is the Acyl-ester intermediate of the active site. The active-site Proton acceptor is the E187. 253-255 (KSG) is a substrate binding site.

Belongs to the class-A beta-lactamase family.

The catalysed reaction is a beta-lactam + H2O = a substituted beta-amino acid. In terms of biological role, this protein is a beta-lactamase with a substrate specificity for penicillins. The polypeptide is Beta-lactamase 1 (blaY) (Bacillus cereus).